The following is a 232-amino-acid chain: Cytochrome c oxidase subunit 2 (232 aa).

Topologically, residues 1–30 (MNNFFQDFNLLFSSSLFSSYMDWFYNFNCS) are mitochondrial intermembrane. Residues 31–52 (LLFGVLSFVSTMFVYLLLSSFY) traverse the membrane as a helical segment. The Mitochondrial matrix segment spans residues 53 to 69 (FKSKKIEYQFGELLCSV). Residues 70–89 (FPTLILVMQMVPSLSLLYYY) traverse the membrane as a helical segment. Over 90-232 (GLMNLDSSLT…KSWCVGLLSD (143 aa)) the chain is Mitochondrial intermembrane. 6 residues coordinate Cu cation: histidine 164, cysteine 199, glutamate 201, cysteine 203, histidine 207, and methionine 210. Residue glutamate 201 coordinates Mg(2+).

It belongs to the cytochrome c oxidase subunit 2 family. As to quaternary structure, component of the cytochrome c oxidase (complex IV, CIV), a multisubunit enzyme composed of a catalytic core of 3 subunits and several supernumerary subunits. The complex exists as a monomer or a dimer and forms supercomplexes (SCs) in the inner mitochondrial membrane with ubiquinol-cytochrome c oxidoreductase (cytochrome b-c1 complex, complex III, CIII). The cofactor is Cu cation.

It is found in the mitochondrion inner membrane. It carries out the reaction 4 Fe(II)-[cytochrome c] + O2 + 8 H(+)(in) = 4 Fe(III)-[cytochrome c] + 2 H2O + 4 H(+)(out). In terms of biological role, component of the cytochrome c oxidase, the last enzyme in the mitochondrial electron transport chain which drives oxidative phosphorylation. The respiratory chain contains 3 multisubunit complexes succinate dehydrogenase (complex II, CII), ubiquinol-cytochrome c oxidoreductase (cytochrome b-c1 complex, complex III, CIII) and cytochrome c oxidase (complex IV, CIV), that cooperate to transfer electrons derived from NADH and succinate to molecular oxygen, creating an electrochemical gradient over the inner membrane that drives transmembrane transport and the ATP synthase. Cytochrome c oxidase is the component of the respiratory chain that catalyzes the reduction of oxygen to water. Electrons originating from reduced cytochrome c in the intermembrane space (IMS) are transferred via the dinuclear copper A center (CU(A)) of subunit 2 and heme A of subunit 1 to the active site in subunit 1, a binuclear center (BNC) formed by heme A3 and copper B (CU(B)). The BNC reduces molecular oxygen to 2 water molecules using 4 electrons from cytochrome c in the IMS and 4 protons from the mitochondrial matrix. This is Cytochrome c oxidase subunit 2 (COII) from Ascaris suum (Pig roundworm).